The primary structure comprises 137 residues: Nucleoside diphosphate kinase (137 aa).

ATP is bound by residues Lys9, Phe57, Arg85, Thr91, Arg102, and Asn112. Residue His115 is the Pros-phosphohistidine intermediate of the active site.

It belongs to the NDK family. Homotetramer. The cofactor is Mg(2+).

Its subcellular location is the cytoplasm. The enzyme catalyses a 2'-deoxyribonucleoside 5'-diphosphate + ATP = a 2'-deoxyribonucleoside 5'-triphosphate + ADP. It carries out the reaction a ribonucleoside 5'-diphosphate + ATP = a ribonucleoside 5'-triphosphate + ADP. In terms of biological role, major role in the synthesis of nucleoside triphosphates other than ATP. The ATP gamma phosphate is transferred to the NDP beta phosphate via a ping-pong mechanism, using a phosphorylated active-site intermediate. This is Nucleoside diphosphate kinase from Campylobacter jejuni subsp. doylei (strain ATCC BAA-1458 / RM4099 / 269.97).